Consider the following 305-residue polypeptide: MTDPTGTGTLHESAHAKINLYLHVTGRRPDGYHLLDSLAVFAGAADRLTLRPGAAGQGEAVALDIAGAFGAGLVADTDSNLVLQAARRLRAEMGVTDRLAPMRIVLEKSLPVASGIGGGSADAAAALRLLLRAWPGEALPRARLMALAVELGADVPVCIDQRAARMGGVGERLAPAPALPNCGMMLVNCGEAVPTPAVFRARAPVFTPAASLPSAWPDVGAMVRDLAALTNDLQDAACELCPTIRTVLQVLDAAPGCRLARMSGSGATCFALFDSPQGARDAMTAVERPGWWVWAGGLHGMPAET.

Residue K17 is part of the active site. 111-121 serves as a coordination point for ATP; the sequence is PVASGIGGGSA. The active site involves D154.

This sequence belongs to the GHMP kinase family. IspE subfamily.

The enzyme catalyses 4-CDP-2-C-methyl-D-erythritol + ATP = 4-CDP-2-C-methyl-D-erythritol 2-phosphate + ADP + H(+). The protein operates within isoprenoid biosynthesis; isopentenyl diphosphate biosynthesis via DXP pathway; isopentenyl diphosphate from 1-deoxy-D-xylulose 5-phosphate: step 3/6. Its function is as follows. Catalyzes the phosphorylation of the position 2 hydroxy group of 4-diphosphocytidyl-2C-methyl-D-erythritol. This chain is 4-diphosphocytidyl-2-C-methyl-D-erythritol kinase, found in Gluconacetobacter diazotrophicus (strain ATCC 49037 / DSM 5601 / CCUG 37298 / CIP 103539 / LMG 7603 / PAl5).